A 594-amino-acid chain; its full sequence is Spindle pole body-associated protein CIK1 (594 aa).

The interval 1–29 is disordered; sequence MNNSKIPKLSFHSDPNNVTRDFPKTKRQK. The stretch at 81 to 360 forms a coiled coil; that stretch reads IERVKNNERK…VNELEKVQQE (280 aa).

Interacts with KAR3; the interaction is direct.

It is found in the nucleus. The protein localises to the cytoplasm. The protein resides in the cytoskeleton. Its subcellular location is the microtubule organizing center. It localises to the spindle pole body. It is found in the spindle. In terms of biological role, together with the minus end-directed microtubule motor KAR3, involved in spindle midzone assembly, karyogamy (nuclear fusion) during mating, and with an essential function in meiosis I. To contribute to spindle midzone assembly during mitotic metaphase, the KAR3-CIK1 motor cross-links anti-parallel microtubules to align them on the spindle axis; as the motor travels polewards splayed microtubules are pulled into alignment. During the karyogamy (nuclear fusion) step of mating, KAR3-CIK1 cross-links antiparallel cytoplasmic microtubules emanating from the spindle pole bodies of mating partners; the motor activity of KAR3 creates the force that pulls the nuclei together by sliding cross-linked microtubules past one another. KAR3-CIK1 promotes microtubule shortening predominantly from the microtubule plus-end. Required for interhomolog recombination, synapsis of homologous chromosomes and establishment of a meiosis I spindle. This chain is Spindle pole body-associated protein CIK1 (CIK1), found in Saccharomyces cerevisiae (strain ATCC 204508 / S288c) (Baker's yeast).